A 71-amino-acid chain; its full sequence is Large ribosomal subunit protein bL31 (71 aa).

The Zn(2+) site is built by Cys16, Cys18, Cys37, and Cys40.

It belongs to the bacterial ribosomal protein bL31 family. Type A subfamily. Part of the 50S ribosomal subunit. Zn(2+) is required as a cofactor.

In terms of biological role, binds the 23S rRNA. The polypeptide is Large ribosomal subunit protein bL31 (Pseudomonas aeruginosa (strain LESB58)).